The chain runs to 85 residues: Large ribosomal subunit protein bL31B (85 aa).

Belongs to the bacterial ribosomal protein bL31 family. Type B subfamily. As to quaternary structure, part of the 50S ribosomal subunit.

The sequence is that of Large ribosomal subunit protein bL31B from Kocuria rhizophila (strain ATCC 9341 / DSM 348 / NBRC 103217 / DC2201).